The following is a 161-amino-acid chain: 2-C-methyl-D-erythritol 2,4-cyclodiphosphate synthase (161 aa).

A divalent metal cation is bound by residues aspartate 13 and histidine 15. Residues 13 to 15 and 40 to 41 each bind 4-CDP-2-C-methyl-D-erythritol 2-phosphate; these read DAH and HS. An a divalent metal cation-binding site is contributed by histidine 48. 62-64 contacts 4-CDP-2-C-methyl-D-erythritol 2-phosphate; it reads DIG.

The protein belongs to the IspF family. In terms of assembly, homotrimer. A divalent metal cation is required as a cofactor.

The catalysed reaction is 4-CDP-2-C-methyl-D-erythritol 2-phosphate = 2-C-methyl-D-erythritol 2,4-cyclic diphosphate + CMP. It participates in isoprenoid biosynthesis; isopentenyl diphosphate biosynthesis via DXP pathway; isopentenyl diphosphate from 1-deoxy-D-xylulose 5-phosphate: step 4/6. Its function is as follows. Involved in the biosynthesis of isopentenyl diphosphate (IPP) and dimethylallyl diphosphate (DMAPP), two major building blocks of isoprenoid compounds. Catalyzes the conversion of 4-diphosphocytidyl-2-C-methyl-D-erythritol 2-phosphate (CDP-ME2P) to 2-C-methyl-D-erythritol 2,4-cyclodiphosphate (ME-CPP) with a corresponding release of cytidine 5-monophosphate (CMP). This Deinococcus radiodurans (strain ATCC 13939 / DSM 20539 / JCM 16871 / CCUG 27074 / LMG 4051 / NBRC 15346 / NCIMB 9279 / VKM B-1422 / R1) protein is 2-C-methyl-D-erythritol 2,4-cyclodiphosphate synthase.